Here is a 313-residue protein sequence, read N- to C-terminus: Homoserine O-succinyltransferase (313 aa).

Residue cysteine 142 is the Acyl-thioester intermediate of the active site. Residues lysine 163 and serine 192 each contribute to the substrate site. Histidine 235 functions as the Proton acceptor in the catalytic mechanism. Glutamate 237 is a catalytic residue. Arginine 249 provides a ligand contact to substrate.

This sequence belongs to the MetA family.

It localises to the cytoplasm. It catalyses the reaction L-homoserine + succinyl-CoA = O-succinyl-L-homoserine + CoA. It functions in the pathway amino-acid biosynthesis; L-methionine biosynthesis via de novo pathway; O-succinyl-L-homoserine from L-homoserine: step 1/1. Functionally, transfers a succinyl group from succinyl-CoA to L-homoserine, forming succinyl-L-homoserine. This chain is Homoserine O-succinyltransferase, found in Vibrio parahaemolyticus serotype O3:K6 (strain RIMD 2210633).